We begin with the raw amino-acid sequence, 427 residues long: Serine hydroxymethyltransferase (427 aa).

(6S)-5,6,7,8-tetrahydrofolate-binding positions include leucine 122 and 126-128; that span reads GHL. Lysine 231 bears the N6-(pyridoxal phosphate)lysine mark. Residues glutamate 247 and 355-357 each bind (6S)-5,6,7,8-tetrahydrofolate; that span reads SPF.

The protein belongs to the SHMT family. As to quaternary structure, homodimer. The cofactor is pyridoxal 5'-phosphate.

The protein localises to the cytoplasm. It catalyses the reaction (6R)-5,10-methylene-5,6,7,8-tetrahydrofolate + glycine + H2O = (6S)-5,6,7,8-tetrahydrofolate + L-serine. Its pathway is one-carbon metabolism; tetrahydrofolate interconversion. The protein operates within amino-acid biosynthesis; glycine biosynthesis; glycine from L-serine: step 1/1. In terms of biological role, catalyzes the reversible interconversion of serine and glycine with tetrahydrofolate (THF) serving as the one-carbon carrier. This reaction serves as the major source of one-carbon groups required for the biosynthesis of purines, thymidylate, methionine, and other important biomolecules. Also exhibits THF-independent aldolase activity toward beta-hydroxyamino acids, producing glycine and aldehydes, via a retro-aldol mechanism. The chain is Serine hydroxymethyltransferase from Crocosphaera subtropica (strain ATCC 51142 / BH68) (Cyanothece sp. (strain ATCC 51142)).